The chain runs to 149 residues: Large ribosomal subunit protein bL20m (149 aa).

The transit peptide at 1-9 directs the protein to the mitochondrion; the sequence is MVFLSAPLW.

The protein belongs to the bacterial ribosomal protein bL20 family. In terms of assembly, component of the mitochondrial ribosome large subunit (39S) which comprises a 16S rRNA and about 50 distinct proteins. Interacts with OXA1L.

It localises to the mitochondrion. In Bos taurus (Bovine), this protein is Large ribosomal subunit protein bL20m (MRPL20).